We begin with the raw amino-acid sequence, 240 residues long: Orotidine 5'-phosphate decarboxylase (240 aa).

Substrate-binding positions include Asp-19, Lys-41, 68-77 (DYKYYDIEET), Thr-123, Arg-184, Gln-193, Gly-213, and Arg-214. Residue Lys-70 is the Proton donor of the active site.

The protein belongs to the OMP decarboxylase family. Type 1 subfamily. In terms of assembly, homodimer.

It carries out the reaction orotidine 5'-phosphate + H(+) = UMP + CO2. It functions in the pathway pyrimidine metabolism; UMP biosynthesis via de novo pathway; UMP from orotate: step 2/2. In terms of biological role, catalyzes the decarboxylation of orotidine 5'-monophosphate (OMP) to uridine 5'-monophosphate (UMP). The protein is Orotidine 5'-phosphate decarboxylase of Nitrobacter winogradskyi (strain ATCC 25391 / DSM 10237 / CIP 104748 / NCIMB 11846 / Nb-255).